The following is a 112-amino-acid chain: UPF0375 protein R05A10.4 (112 aa).

An N-terminal signal peptide occupies residues 1–19 (MNLSIFSAIIFSITIASSA). An N-linked (GlcNAc...) asparagine glycan is attached at Asn-59.

This sequence belongs to the UPF0375 family.

The protein localises to the secreted. The chain is UPF0375 protein R05A10.4 from Caenorhabditis elegans.